The chain runs to 875 residues: Alanine--tRNA ligase (875 aa).

H564, H568, C666, and H670 together coordinate Zn(2+).

The protein belongs to the class-II aminoacyl-tRNA synthetase family. Homotetramer. Zn(2+) serves as cofactor.

It localises to the cytoplasm. It carries out the reaction tRNA(Ala) + L-alanine + ATP = L-alanyl-tRNA(Ala) + AMP + diphosphate. In terms of biological role, catalyzes the attachment of alanine to tRNA(Ala) in a two-step reaction: alanine is first activated by ATP to form Ala-AMP and then transferred to the acceptor end of tRNA(Ala). Also edits incorrectly charged Ser-tRNA(Ala) and Gly-tRNA(Ala) via its editing domain. In Yersinia pseudotuberculosis serotype O:1b (strain IP 31758), this protein is Alanine--tRNA ligase.